The primary structure comprises 32 residues: MSDIN-like toxin proprotein 2 (32 aa).

Positions 1–10 are excised as a propeptide; that stretch reads MSDINATRLP. Residues 11-17 constitute a cross-link (cyclopeptide (His-Pro)); the sequence is HLVRYPP. Positions 18-32 are excised as a propeptide; it reads YVGDGTDLTLNRGEK.

It belongs to the MSDIN fungal toxin family. In terms of processing, processed by the macrocyclase-peptidase enzyme POPB to yield a toxic cyclic heptapeptide. POPB first removes 10 residues from the N-terminus. Conformational trapping of the remaining peptide forces the enzyme to release this intermediate rather than proceed to macrocyclization. The enzyme rebinds the remaining peptide in a different conformation and catalyzes macrocyclization of the N-terminal 7 residues.

Functionally, probable toxin that belongs to the MSDIN-like toxin family responsible for a large number of food poisoning cases and deaths. The protein is MSDIN-like toxin proprotein 2 of Amanita fuligineoides.